We begin with the raw amino-acid sequence, 364 residues long: Caffeic acid 3-O-methyltransferase (364 aa).

131–137 (MNQDKVL) serves as a coordination point for substrate. The segment at 163–181 (AFEYHGTDSRFNRVFNEGM) is substrate binding. S-adenosyl-L-methionine-binding residues include Gly209, Asp232, Asp252, Met253, and Lys266. The active-site Proton acceptor is His270.

It belongs to the class I-like SAM-binding methyltransferase superfamily. Cation-independent O-methyltransferase family. COMT subfamily. As to quaternary structure, homodimer. Confined to the vascular tissues of organs undergoing lignification such as stems and roots.

It catalyses the reaction (E)-caffeate + S-adenosyl-L-methionine = (E)-ferulate + S-adenosyl-L-homocysteine + H(+). It carries out the reaction tricetin + 2 S-adenosyl-L-methionine = 3',5'-di-O-methyltricetin + 2 S-adenosyl-L-homocysteine + 2 H(+). The enzyme catalyses luteolin + S-adenosyl-L-methionine = chrysoeriol + S-adenosyl-L-homocysteine + H(+). The catalysed reaction is tricetin + S-adenosyl-L-methionine = 3'-O-methyltricetin + S-adenosyl-L-homocysteine + H(+). Its pathway is aromatic compound metabolism; phenylpropanoid biosynthesis. Functionally, catalyzes the conversion of caffeic acid to ferulic acid and of 5-hydroxyferulic acid to sinapic acid. The resulting products may subsequently be converted to the corresponding alcohols that are incorporated into lignins. Can use the flavone tricetin (5,7,3',4',5'-pentahydroxyflavone) as the preferred substrate and give rise to its 3',5'-dimethyl derivative, tricin (3',5'-dimethoxy-5,7,4'-trihydroxyflavone), as the major product, and selgin to a lower extent. Tricin exhibits potential benefits for human health including relaxant effect on smooth muscle of intestinal tissues, antioxidant effect, antihistaminic activity, and growth inhibition of human malignant breast tumor cells and colon cancer cells. Can also use luteolin, quercetin and 5-hydroxyferulic acid (5HF) as substrates. This is Caffeic acid 3-O-methyltransferase from Zea mays (Maize).